The sequence spans 219 residues: Guanylate kinase (219 aa).

The Guanylate kinase-like domain occupies 15 to 194; it reads GLMFVLSSPS…AFAEVQSILK (180 aa). Position 22–29 (22–29) interacts with ATP; the sequence is SPSGAGKT.

The protein belongs to the guanylate kinase family.

It localises to the cytoplasm. It catalyses the reaction GMP + ATP = GDP + ADP. Essential for recycling GMP and indirectly, cGMP. The sequence is that of Guanylate kinase from Bradyrhizobium diazoefficiens (strain JCM 10833 / BCRC 13528 / IAM 13628 / NBRC 14792 / USDA 110).